Consider the following 437-residue polypeptide: Enolase (437 aa).

Residue Q162 coordinates (2R)-2-phosphoglycerate. E204 serves as the catalytic Proton donor. 3 residues coordinate Mg(2+): D251, E297, and D324. Positions 349, 378, 379, and 400 each coordinate (2R)-2-phosphoglycerate. K349 functions as the Proton acceptor in the catalytic mechanism.

It belongs to the enolase family. It depends on Mg(2+) as a cofactor.

It is found in the cytoplasm. The protein localises to the secreted. Its subcellular location is the cell surface. It catalyses the reaction (2R)-2-phosphoglycerate = phosphoenolpyruvate + H2O. Its pathway is carbohydrate degradation; glycolysis; pyruvate from D-glyceraldehyde 3-phosphate: step 4/5. In terms of biological role, catalyzes the reversible conversion of 2-phosphoglycerate (2-PG) into phosphoenolpyruvate (PEP). It is essential for the degradation of carbohydrates via glycolysis. This Pelodictyon phaeoclathratiforme (strain DSM 5477 / BU-1) protein is Enolase.